The primary structure comprises 321 residues: Cytochrome f (321 aa).

The first 35 residues, 1 to 35 (MQNTNTLNWINKLIYLSISIPIFFLILVTTYPNSV), serve as a signal peptide directing secretion. 4 residues coordinate heme: Tyr38, Cys58, Cys61, and His62. A helical transmembrane segment spans residues 287–307 (MEGLILFFISVILAQVFLVLK).

This sequence belongs to the cytochrome f family. As to quaternary structure, the 4 large subunits of the cytochrome b6-f complex are cytochrome b6, subunit IV (17 kDa polypeptide, petD), cytochrome f and the Rieske protein, while the 4 small subunits are PetG, PetL, PetM and PetN. The complex functions as a dimer. Heme serves as cofactor.

The protein localises to the plastid. The protein resides in the chloroplast thylakoid membrane. Its function is as follows. Component of the cytochrome b6-f complex, which mediates electron transfer between photosystem II (PSII) and photosystem I (PSI), cyclic electron flow around PSI, and state transitions. The polypeptide is Cytochrome f (Chara vulgaris (Common stonewort)).